A 121-amino-acid polypeptide reads, in one-letter code: NADH-quinone oxidoreductase subunit A 1 (121 aa).

3 consecutive transmembrane segments (helical) span residues 11 to 31 (IAIFIGIALVIGLALLVAPFA), 65 to 85 (LVSILFIIFDLEVAFLFPWAV), and 90 to 110 (MGWFGFWSMMVFLLVLTVGFI).

This sequence belongs to the complex I subunit 3 family. As to quaternary structure, NDH-1 is composed of 14 different subunits. Subunits NuoA, H, J, K, L, M, N constitute the membrane sector of the complex.

It is found in the cell inner membrane. It carries out the reaction a quinone + NADH + 5 H(+)(in) = a quinol + NAD(+) + 4 H(+)(out). In terms of biological role, NDH-1 shuttles electrons from NADH, via FMN and iron-sulfur (Fe-S) centers, to quinones in the respiratory chain. The immediate electron acceptor for the enzyme in this species is believed to be ubiquinone. Couples the redox reaction to proton translocation (for every two electrons transferred, four hydrogen ions are translocated across the cytoplasmic membrane), and thus conserves the redox energy in a proton gradient. This chain is NADH-quinone oxidoreductase subunit A 1, found in Rhizobium meliloti (strain 1021) (Ensifer meliloti).